Reading from the N-terminus, the 425-residue chain is Bifunctional phosphoribosylaminoimidazole carboxylase/phosphoribosylaminoimidazole succinocarboxamide synthetase (425 aa).

Ala2 bears the N-acetylalanine mark. The tract at residues 2-260 (ATAEVLNIGR…WVADRVELLL (259 aa)) is SAICAR synthetase domain. Position 22 is a phosphotyrosine (Tyr22). Ser27 carries the post-translational modification Phosphoserine. Residue Lys36 is modified to N6-acetyllysine. Ser107 carries the phosphoserine modification. Thr238 carries the phosphothreonine modification. Lys247 is modified (N6-acetyllysine). The segment at 261 to 266 (KSNSQC) is linker. The interval 267 to 425 (RVVVLMGSTS…ADKKIRECNL (159 aa)) is AIR carboxylase domain. The residue at position 274 (Ser274) is a Phosphoserine. Ser332 provides a ligand contact to CO2.

The protein in the N-terminal section; belongs to the SAICAR synthetase family. This sequence in the C-terminal section; belongs to the AIR carboxylase family. Class II subfamily. Homooctamer.

The enzyme catalyses 5-amino-1-(5-phospho-D-ribosyl)imidazole-4-carboxylate + L-aspartate + ATP = (2S)-2-[5-amino-1-(5-phospho-beta-D-ribosyl)imidazole-4-carboxamido]succinate + ADP + phosphate + 2 H(+). It catalyses the reaction 5-amino-1-(5-phospho-D-ribosyl)imidazole-4-carboxylate + H(+) = 5-amino-1-(5-phospho-beta-D-ribosyl)imidazole + CO2. The protein operates within purine metabolism; IMP biosynthesis via de novo pathway; 5-amino-1-(5-phospho-D-ribosyl)imidazole-4-carboxamide from 5-amino-1-(5-phospho-D-ribosyl)imidazole-4-carboxylate: step 1/2. Its pathway is purine metabolism; IMP biosynthesis via de novo pathway; 5-amino-1-(5-phospho-D-ribosyl)imidazole-4-carboxylate from 5-amino-1-(5-phospho-D-ribosyl)imidazole (carboxylase route): step 1/1. In terms of biological role, bifunctional phosphoribosylaminoimidazole carboxylase and phosphoribosylaminoimidazole succinocarboxamide synthetase catalyzing two reactions of the de novo purine biosynthetic pathway. The polypeptide is Bifunctional phosphoribosylaminoimidazole carboxylase/phosphoribosylaminoimidazole succinocarboxamide synthetase (Rattus norvegicus (Rat)).